The sequence spans 529 residues: MCTPDENDYKTSTDPDTSANTNHTLEKKKRKKRKNTNVACVNCSRLHVSCEAKRPCLRCISKGLTATCVDAPRKKSKYLAGIPNRELPMSIQPDLPPRKIMIPIYNNSSNSSLNVNNMGEQQKFTSPQHIVHKAKFLSNAADSEYSILSNIIYQDTLSNKIPIDILYSNTNSTSNSTIGNSSNNSPTGTNTSPEETEMEKIRQLYSEQRANMPPHPYPSSNQNVYSILLGPNSAKIVASQVNLFANHFPLVPVDSADNSLNFKRLLPRDPSEKSSQINWDSSINQYYLNSETVTFPELAIPLKRRKNHLVSVSLESCSPDAANIKSNVGWEHSLRYSTPMEIYTSINAPFSHTPGFHHLLVYLKHRFNQQDLVKMCRSIAEFRPIFIACSVTLTEEDMIFMEQCYQRTLLEYVKFIAQIGTPTCIWRRNGQISYVNEEFEILCGWTREELLNKMTFIVEIMDDESVRDYFKTLSKVAYRDFRGSEKMKVCRLLSPIKGKIIHCCCMWTLKRDVSGLPLMILGNFMPILN.

Residues 1-31 (MCTPDENDYKTSTDPDTSANTNHTLEKKKRK) form a disordered region. The segment covering 14–23 (DPDTSANTNH) has biased composition (polar residues). The zn(2)-C6 fungal-type DNA-binding region spans 40–68 (CVNCSRLHVSCEAKRPCLRCISKGLTATC). The span at 174-193 (SNSTIGNSSNNSPTGTNTSP) shows a compositional bias: low complexity. Positions 174–198 (SNSTIGNSSNNSPTGTNTSPEETEM) are disordered. One can recognise a PAS domain in the interval 408–480 (TLLEYVKFIA…KTLSKVAYRD (73 aa)).

Belongs to the ERT1/acuK family.

It localises to the nucleus. Functionally, transcription factor which regulates nonfermentable carbon utilization. Activator of gluconeogenetic genes. The chain is Transcription activator of gluconeogenesis (ERT1) from Saccharomyces cerevisiae (strain JAY291) (Baker's yeast).